The primary structure comprises 527 residues: Arginine--tRNA ligase (527 aa).

The 'HIGH' region motif lies at 112–122 (ANPTGPLHIGH).

Belongs to the class-I aminoacyl-tRNA synthetase family. In terms of assembly, monomer.

It is found in the cytoplasm. It carries out the reaction tRNA(Arg) + L-arginine + ATP = L-arginyl-tRNA(Arg) + AMP + diphosphate. This is Arginine--tRNA ligase from Nitratiruptor sp. (strain SB155-2).